Consider the following 540-residue polypeptide: NEDD8-activating enzyme E1 regulatory subunit AXR1 (540 aa).

Belongs to the ubiquitin-activating E1 family. ULA1 subfamily. In terms of assembly, heterodimer of ECR1 and AXR1. The complex binds to RUB1/NEDD8 and RCE1. As to expression, expressed in shoot, root and floral meristems, in vascular tissues of cotyledons and mature leaves, and in the stele of the root. Expressed at higher levels on the lower side of an emerging root during germination and at higher levels on the underside of the apical hook.

It localises to the nucleus. The protein operates within protein modification; protein neddylation. Functionally, regulatory subunit of the dimeric ECR1-AXR1 E1 enzyme. E1 activates RUB1/NEDD8 by first adenylating its C-terminal glycine residue with ATP, thereafter linking this residue to the side chain of the catalytic cysteine, yielding a RUB1-ECR1 thioester and free AMP. E1 finally transfers RUB1 to the catalytic cysteine of RCE1. Plays an important role in auxin response. Regulates the chromosomal localization of meiotic recombination by crossovers (COs) and subsequent synapsis, probably through the activation of a CRL4 complex. Required for E3-mediated protein degradation in response to auxin, jasmonic acid and cold stress. Required for the COP1-COP10-CSN-mediated repression of photomorphogenesis in the dark. May function redundantly with AXL1 in the RUB conjugating pathway. Seems not to be functionally equivalent to AXL1 in vivo. The chain is NEDD8-activating enzyme E1 regulatory subunit AXR1 from Arabidopsis thaliana (Mouse-ear cress).